A 215-amino-acid chain; its full sequence is 3,4-dihydroxy-2-butanone 4-phosphate synthase (215 aa).

Residues 38-39 (RE), Asp-43, 151-155 (RRGHT), and Glu-175 each bind D-ribulose 5-phosphate. Glu-39 is a Mg(2+) binding site. His-154 provides a ligand contact to Mg(2+).

Belongs to the DHBP synthase family. Homodimer. Mg(2+) is required as a cofactor. It depends on Mn(2+) as a cofactor.

The enzyme catalyses D-ribulose 5-phosphate = (2S)-2-hydroxy-3-oxobutyl phosphate + formate + H(+). Its pathway is cofactor biosynthesis; riboflavin biosynthesis; 2-hydroxy-3-oxobutyl phosphate from D-ribulose 5-phosphate: step 1/1. Its function is as follows. Catalyzes the conversion of D-ribulose 5-phosphate to formate and 3,4-dihydroxy-2-butanone 4-phosphate. The sequence is that of 3,4-dihydroxy-2-butanone 4-phosphate synthase from Haemophilus influenzae (strain PittGG).